Here is a 550-residue protein sequence, read N- to C-terminus: Glucose-6-phosphate isomerase (550 aa).

E356 serves as the catalytic Proton donor. Catalysis depends on residues H387 and K515.

It belongs to the GPI family.

Its subcellular location is the cytoplasm. It carries out the reaction alpha-D-glucose 6-phosphate = beta-D-fructose 6-phosphate. It participates in carbohydrate biosynthesis; gluconeogenesis. The protein operates within carbohydrate degradation; glycolysis; D-glyceraldehyde 3-phosphate and glycerone phosphate from D-glucose: step 2/4. Functionally, catalyzes the reversible isomerization of glucose-6-phosphate to fructose-6-phosphate. The chain is Glucose-6-phosphate isomerase from Vibrio parahaemolyticus serotype O3:K6 (strain RIMD 2210633).